Here is a 127-residue protein sequence, read N- to C-terminus: Small ribosomal subunit protein uS12 (127 aa).

The residue at position 89 (aspartate 89) is a 3-methylthioaspartic acid.

It belongs to the universal ribosomal protein uS12 family. As to quaternary structure, part of the 30S ribosomal subunit. Contacts proteins S8 and S17. May interact with IF1 in the 30S initiation complex.

With S4 and S5 plays an important role in translational accuracy. Functionally, interacts with and stabilizes bases of the 16S rRNA that are involved in tRNA selection in the A site and with the mRNA backbone. Located at the interface of the 30S and 50S subunits, it traverses the body of the 30S subunit contacting proteins on the other side and probably holding the rRNA structure together. The combined cluster of proteins S8, S12 and S17 appears to hold together the shoulder and platform of the 30S subunit. The sequence is that of Small ribosomal subunit protein uS12 from Aliarcobacter butzleri (strain RM4018) (Arcobacter butzleri).